The following is a 621-amino-acid chain: Lethal(3)malignant brain tumor-like protein 4 (621 aa).

The disordered stretch occupies residues 1–48 (MRQPNRKRKLSLESTERMNQDRCTGQTEEEKKPGEVTTPSKRESSVTT). Basic and acidic residues-rich tracts occupy residues 10–20 (LSLESTERMNQ) and 28–44 (EEEKKPGEVTTPSKRES). MBT repeat units follow at residues 52–152 (WSWE…LHIP), 160–260 (FVWM…LVAP), and 269–364 (FSWT…LEVP). A CCHHC-type zinc finger spans residues 370 to 414 (VKILPGQPACPTPGCRGIGHIRGPRYAGHHSAFGCPYSDVNLKRE). Zn(2+) is bound by residues cysteine 379, cysteine 384, histidine 398, and cysteine 404. Residues 543–607 (WTVDEVAEFV…YNSILMFRNS (65 aa)) enclose the SAM domain.

It localises to the nucleus. In terms of biological role, putative Polycomb group (PcG) protein. PcG proteins maintain the transcriptionally repressive state of genes, probably via a modification of chromatin, rendering it heritably changed in its expressibility. The protein is Lethal(3)malignant brain tumor-like protein 4 (L3mbtl4) of Mus musculus (Mouse).